A 700-amino-acid polypeptide reads, in one-letter code: Beta-galactosidase BgaB (700 aa).

Substrate is bound by residues R122 and N160. E161 functions as the Proton donor in the catalytic mechanism. E320 functions as the Nucleophile in the catalytic mechanism. Residues W328 and 368-371 each bind substrate; that span reads EAFH.

Belongs to the glycosyl hydrolase 42 family. In terms of assembly, trimer. Tetramer. The N-terminus is blocked.

The enzyme catalyses Hydrolysis of terminal non-reducing beta-D-galactose residues in beta-D-galactosides.. With respect to regulation, inhibited by high substrate concentrations (100 mg/ml). No effect on activity with various EDTA concentrations (0-1 mM). 20-fold higher activity when cells grown on TOS than when cells grown on galactose, glucose and lactose. Its function is as follows. Involved in the hydrolysis of transgalactooligosaccharides (TOS). Highly active towards Gal(beta1-4)Gal and Gal(beta1-4)-Gal-containing oligosaccharides. Low activity towards Gal(beta1-3)Gal, lactose and Gal(beta1-3)GalOMe. No activity towards Gal(beta1-6)Gal, Gal(beta1-4)Man, Gal(alpha1-4)Gal, Gal(alpha1-3)Gal(beta1-4)Gal, lactulose, 3'fucosyllactose, lacto-N-fucopentaose I, lacto-N-fucopentaose II, cellobiose, maltose or sucrose. No transglycosylation activity is found at high substrate concentrations (100 mg/ml) and only low transglycosylation activity at lower substrate concentrations (10 mg/ml). The polypeptide is Beta-galactosidase BgaB (bgaB) (Bifidobacterium adolescentis (strain ATCC 15703 / DSM 20083 / NCTC 11814 / E194a)).